A 188-amino-acid chain; its full sequence is Killer cell lectin-like receptor subfamily G member 1 (188 aa).

At 1-33 (MADSSIYSTLELPEAPQVQDESRWKLKAVLHRP) the chain is on the cytoplasmic side. Positions 5–10 (SIYSTL) match the ITIM motif motif. The helical; Signal-anchor for type II membrane protein transmembrane segment at 34-56 (HLSRFAMVALGLLTVILMSLLMY) threads the bilayer. Residues 57-188 (QRILCCGSKD…LQWICKKVLY (132 aa)) are Extracellular-facing. Cysteine 75 and cysteine 86 are oxidised to a cystine. Asparagine 82 and asparagine 97 each carry an N-linked (GlcNAc...) asparagine glycan. One can recognise a C-type lectin domain in the interval 82–184 (NGSHCYYFSM…CEVALQWICK (103 aa)). Disulfide bonds link cysteine 103-cysteine 183 and cysteine 162-cysteine 175.

Forms a monomer and homodimer; disulfide-linked. Interacts (via ITIM motif) with PTPN11 and INPP5D. Phosphorylated in response to monoclonal antibody G63 binding and antigenic stimulation. Expressed specifically on natural killer (NK) cells and activated CD8 T-cells. Not detected in spleen, thymus, lymph node, testis, brain or kidney. Not detected on mast cell lines, bone marrow-derived mast cells, or peritoneal mast cells.

It is found in the cell membrane. Its function is as follows. Plays an inhibitory role on natural killer (NK) cells and T-cell functions upon binding to their non-MHC ligands. May mediate missing self recognition by binding to a highly conserved site on classical cadherins, enabling it to monitor expression of E-cadherin/CDH1, N-cadherin/CDH2 and R-cadherin/CDH4 on target cells. The sequence is that of Killer cell lectin-like receptor subfamily G member 1 (Klrg1) from Mus musculus (Mouse).